Consider the following 427-residue polypeptide: 3-phosphoshikimate 1-carboxyvinyltransferase (427 aa).

Residues lysine 22, serine 23, and arginine 27 each contribute to the 3-phosphoshikimate site. Residue lysine 22 participates in phosphoenolpyruvate binding. Positions 96 and 124 each coordinate phosphoenolpyruvate. 3-phosphoshikimate is bound by residues serine 169, serine 170, glutamine 171, serine 197, aspartate 313, asparagine 336, and lysine 340. Glutamine 171 serves as a coordination point for phosphoenolpyruvate. The active-site Proton acceptor is aspartate 313. Phosphoenolpyruvate-binding residues include arginine 344, arginine 386, and lysine 411.

Belongs to the EPSP synthase family. Monomer.

It is found in the cytoplasm. It catalyses the reaction 3-phosphoshikimate + phosphoenolpyruvate = 5-O-(1-carboxyvinyl)-3-phosphoshikimate + phosphate. The protein operates within metabolic intermediate biosynthesis; chorismate biosynthesis; chorismate from D-erythrose 4-phosphate and phosphoenolpyruvate: step 6/7. In terms of biological role, catalyzes the transfer of the enolpyruvyl moiety of phosphoenolpyruvate (PEP) to the 5-hydroxyl of shikimate-3-phosphate (S3P) to produce enolpyruvyl shikimate-3-phosphate and inorganic phosphate. This chain is 3-phosphoshikimate 1-carboxyvinyltransferase, found in Salmonella arizonae (strain ATCC BAA-731 / CDC346-86 / RSK2980).